A 230-amino-acid chain; its full sequence is RNA chaperone ProQ (230 aa).

Positions 104–176 (AEAKARVQAQ…APRQNTEKLT (73 aa)) are disordered. A compositionally biased stretch (basic and acidic residues) spans 115-132 (AEQRAKKREAEGDKETSK).

The protein belongs to the ProQ family.

The protein resides in the cytoplasm. Its function is as follows. RNA chaperone with significant RNA binding, RNA strand exchange and RNA duplexing activities. May regulate ProP activity through an RNA-based, post-transcriptional mechanism. This is RNA chaperone ProQ from Proteus mirabilis (strain HI4320).